We begin with the raw amino-acid sequence, 156 residues long: Regulatory protein RecX (156 aa).

Belongs to the RecX family.

The protein resides in the cytoplasm. Functionally, modulates RecA activity. The sequence is that of Regulatory protein RecX from Pseudomonas putida (strain ATCC 47054 / DSM 6125 / CFBP 8728 / NCIMB 11950 / KT2440).